Consider the following 431-residue polypeptide: Na(+)-translocating NADH-quinone reductase subunit F (431 aa).

The chain crosses the membrane as a helical span at residues Ile-10–Ile-30. Residues Cys-41–Tyr-133 enclose the 2Fe-2S ferredoxin-type domain. Positions 76, 82, 85, and 117 each coordinate [2Fe-2S] cluster. Residues Ala-136–Lys-286 enclose the FAD-binding FR-type domain.

Belongs to the NqrF family. In terms of assembly, composed of six subunits; NqrA, NqrB, NqrC, NqrD, NqrE and NqrF. The cofactor is [2Fe-2S] cluster. It depends on FAD as a cofactor.

The protein localises to the cell inner membrane. The catalysed reaction is a ubiquinone + n Na(+)(in) + NADH + H(+) = a ubiquinol + n Na(+)(out) + NAD(+). NQR complex catalyzes the reduction of ubiquinone-1 to ubiquinol by two successive reactions, coupled with the transport of Na(+) ions from the cytoplasm to the periplasm. The first step is catalyzed by NqrF, which accepts electrons from NADH and reduces ubiquinone-1 to ubisemiquinone by a one-electron transfer pathway. This Chlamydia felis (strain Fe/C-56) (Chlamydophila felis) protein is Na(+)-translocating NADH-quinone reductase subunit F.